The chain runs to 182 residues: Adenine phosphoribosyltransferase (182 aa).

The protein belongs to the purine/pyrimidine phosphoribosyltransferase family. In terms of assembly, homodimer.

It is found in the cytoplasm. The catalysed reaction is AMP + diphosphate = 5-phospho-alpha-D-ribose 1-diphosphate + adenine. It functions in the pathway purine metabolism; AMP biosynthesis via salvage pathway; AMP from adenine: step 1/1. Functionally, catalyzes a salvage reaction resulting in the formation of AMP, that is energically less costly than de novo synthesis. The protein is Adenine phosphoribosyltransferase of Pseudomonas aeruginosa (strain LESB58).